Here is a 139-residue protein sequence, read N- to C-terminus: Metallothiol transferase FosB (139 aa).

Residues 4–119 (GINHITYSVS…DGHKLELHTG (116 aa)) enclose the VOC domain. The Mg(2+) site is built by histidine 7, histidine 66, and glutamate 115. The active-site Proton donor/acceptor is the glutamate 115.

It belongs to the fosfomycin resistance protein family. FosB subfamily. Homodimer. Mg(2+) serves as cofactor.

The protein localises to the cytoplasm. Functionally, metallothiol transferase which confers resistance to fosfomycin by catalyzing the addition of a thiol cofactor to fosfomycin. L-cysteine is probably the physiological thiol donor. This Staphylococcus haemolyticus protein is Metallothiol transferase FosB.